Reading from the N-terminus, the 88-residue chain is Acylphosphatase (88 aa).

The region spanning 3 to 88 is the Acylphosphatase-like domain; that stretch reads AARFVVSGVV…VPPTEDFVTG (86 aa). Active-site residues include R18 and N36.

This sequence belongs to the acylphosphatase family.

The enzyme catalyses an acyl phosphate + H2O = a carboxylate + phosphate + H(+). The polypeptide is Acylphosphatase (acyP) (Xanthomonas oryzae pv. oryzae (strain MAFF 311018)).